Consider the following 555-residue polypeptide: Glutamine--tRNA ligase (555 aa).

Residues 34–44 (PEPNGYLHIGH) carry the 'HIGH' region motif. ATP is bound by residues 35–37 (EPN) and 41–47 (HIGHAKS). L-glutamine contacts are provided by aspartate 67 and tyrosine 212. Residues threonine 231, 261–262 (RL), and 269–271 (MSK) each bind ATP. Positions 268–272 (IMSKR) match the 'KMSKS' region motif.

This sequence belongs to the class-I aminoacyl-tRNA synthetase family. In terms of assembly, monomer.

The protein resides in the cytoplasm. The enzyme catalyses tRNA(Gln) + L-glutamine + ATP = L-glutaminyl-tRNA(Gln) + AMP + diphosphate. This Erwinia tasmaniensis (strain DSM 17950 / CFBP 7177 / CIP 109463 / NCPPB 4357 / Et1/99) protein is Glutamine--tRNA ligase.